The following is a 719-amino-acid chain: DNA ligase (719 aa).

Residues 42–46 (DAAYD), 92–93 (SL), and Glu-126 contribute to the NAD(+) site. Lys-128 functions as the N6-AMP-lysine intermediate in the catalytic mechanism. Residues Arg-149, Glu-185, Lys-301, and Lys-325 each coordinate NAD(+). Zn(2+) contacts are provided by Cys-430, Cys-433, Cys-448, and Cys-454. A BRCT domain is found at 640 to 719 (ATGSPVEGKT…DDWFKLVGED (80 aa)).

It belongs to the NAD-dependent DNA ligase family. LigA subfamily. It depends on Mg(2+) as a cofactor. Mn(2+) serves as cofactor.

The enzyme catalyses NAD(+) + (deoxyribonucleotide)n-3'-hydroxyl + 5'-phospho-(deoxyribonucleotide)m = (deoxyribonucleotide)n+m + AMP + beta-nicotinamide D-nucleotide.. DNA ligase that catalyzes the formation of phosphodiester linkages between 5'-phosphoryl and 3'-hydroxyl groups in double-stranded DNA using NAD as a coenzyme and as the energy source for the reaction. It is essential for DNA replication and repair of damaged DNA. This chain is DNA ligase, found in Brucella melitensis biotype 1 (strain ATCC 23456 / CCUG 17765 / NCTC 10094 / 16M).